We begin with the raw amino-acid sequence, 143 residues long: MRVLVQRVSSAAVTVEGAVVGAIRPDAQGLLAFVGVTHSDDRDKARRLAEKLWKLRILADERSASDVGAPILVVSQFTLYADTAKGRRPSWNAAAPAAVAEPLVTEFAAALQGLGADVQTGVFGANMQVELVNDGPVTVLLEL.

The Gly-cisPro motif, important for rejection of L-amino acids signature appears at 135-136 (GP).

Belongs to the DTD family. As to quaternary structure, homodimer.

The protein localises to the cytoplasm. The enzyme catalyses glycyl-tRNA(Ala) + H2O = tRNA(Ala) + glycine + H(+). It catalyses the reaction a D-aminoacyl-tRNA + H2O = a tRNA + a D-alpha-amino acid + H(+). Its function is as follows. An aminoacyl-tRNA editing enzyme that deacylates mischarged D-aminoacyl-tRNAs. Also deacylates mischarged glycyl-tRNA(Ala), protecting cells against glycine mischarging by AlaRS. Acts via tRNA-based rather than protein-based catalysis; rejects L-amino acids rather than detecting D-amino acids in the active site. By recycling D-aminoacyl-tRNA to D-amino acids and free tRNA molecules, this enzyme counteracts the toxicity associated with the formation of D-aminoacyl-tRNA entities in vivo and helps enforce protein L-homochirality. This Mycobacterium avium (strain 104) protein is D-aminoacyl-tRNA deacylase.